Reading from the N-terminus, the 359-residue chain is Type-1 angiotensin II receptor (359 aa).

The Extracellular segment spans residues 1-25 (MILNSSTEDGIKRIQDDCPKAGRHN). A glycan (N-linked (GlcNAc...) asparagine) is linked at asparagine 4. Glutamine 15 and aspartate 17 together coordinate angiotensin II. Intrachain disulfides connect cysteine 18-cysteine 274 and cysteine 101-cysteine 180. Residues 26 to 55 (YIFVMIPTLYSIIFVVGIFGNSLVVIVIYF) form a helical membrane-spanning segment. Residues 56 to 61 (YMKLKT) are Cytoplasmic-facing. A helical membrane pass occupies residues 62-89 (VASVFLLNLALADLCFLLTLPLWAVYTA). The Extracellular segment spans residues 90–98 (MEYRWPFGN). A helical membrane pass occupies residues 99–125 (YLCKIASASVSFNLYASVFLLTCLSID). Residues 126 to 141 (RYLAIVHPMKSRLRRT) lie on the Cytoplasmic side of the membrane. Residues 142–165 (MLVAKVTCIIIWLLAGLASLPAII) traverse the membrane as a helical segment. Over 166–190 (HRNVFFIENTNITVCAFHYESQNST) the chain is Extracellular. An angiotensin II-binding site is contributed by arginine 167. Asparagine 176 is a glycosylation site (N-linked (GlcNAc...) asparagine). Phenylalanine 182, histidine 183, and tyrosine 184 together coordinate angiotensin II. Asparagine 188 carries an N-linked (GlcNAc...) asparagine glycan. The helical transmembrane segment at 191–216 (LPIGLGLTKNILGFLFPFLIILTSYT) threads the bilayer. Lysine 199 contributes to the angiotensin II binding site. Residues 217-239 (LIWKALKKAYEIQKNKPRNDDIF) lie on the Cytoplasmic side of the membrane. The helical transmembrane segment at 240-268 (KIIMAIVLFFFFSWIPHQIFTFLDVLIQL) threads the bilayer. Over 269 to 278 (GIIRDCRIAD) the chain is Extracellular. Residues 279 to 304 (IVDTAMPITICIAYFNNCLNPLFYGF) form a helical membrane-spanning segment. Residues 305 to 359 (LGKKFKKYFLQLLKYIPPKAKSHSNLSTKMSTLSYRPSDNVSSSTKKPAPCFEVE) are Cytoplasmic-facing. The segment covering 335-350 (STLSYRPSDNVSSSTK) has biased composition (polar residues). Positions 335-359 (STLSYRPSDNVSSSTKKPAPCFEVE) are disordered. Cysteine 355 carries S-palmitoyl cysteine lipidation.

The protein belongs to the G-protein coupled receptor 1 family. As to quaternary structure, interacts with MAS1. Interacts with ARRB1. Interacts with FLNA (via filamin repeat 21); increases PKA-mediated phosphorylation of FLNA. Post-translationally, C-terminal Ser or Thr residues may be phosphorylated.

The protein resides in the cell membrane. Functionally, receptor for angiotensin II, a vasoconstricting peptide, which acts as a key regulator of blood pressure and sodium retention by the kidney. The activated receptor in turn couples to G-alpha proteins G(q) (GNAQ, GNA11, GNA14 or GNA15) and thus activates phospholipase C and increases the cytosolic Ca(2+) concentrations, which in turn triggers cellular responses such as stimulation of protein kinase C. The sequence is that of Type-1 angiotensin II receptor (AGTR1) from Pan troglodytes (Chimpanzee).